The sequence spans 218 residues: Cytidylate kinase (218 aa).

11 to 19 is a binding site for ATP; sequence GPGASGKGT.

It belongs to the cytidylate kinase family. Type 1 subfamily.

The protein resides in the cytoplasm. The enzyme catalyses CMP + ATP = CDP + ADP. It carries out the reaction dCMP + ATP = dCDP + ADP. The polypeptide is Cytidylate kinase (Neisseria gonorrhoeae (strain ATCC 700825 / FA 1090)).